The following is a 372-amino-acid chain: Glutamate 5-kinase (372 aa).

K14 serves as a coordination point for ATP. Positions 54, 141, and 153 each coordinate substrate. 173–174 (TD) is a binding site for ATP. In terms of domain architecture, PUA spans 280-358 (RGTLVLDDGA…DAIEALLGYV (79 aa)).

Belongs to the glutamate 5-kinase family.

It is found in the cytoplasm. The enzyme catalyses L-glutamate + ATP = L-glutamyl 5-phosphate + ADP. Its pathway is amino-acid biosynthesis; L-proline biosynthesis; L-glutamate 5-semialdehyde from L-glutamate: step 1/2. Functionally, catalyzes the transfer of a phosphate group to glutamate to form L-glutamate 5-phosphate. This Pseudomonas paraeruginosa (strain DSM 24068 / PA7) (Pseudomonas aeruginosa (strain PA7)) protein is Glutamate 5-kinase.